Reading from the N-terminus, the 258-residue chain is Enoyl-[acyl-carrier-protein] reductase [NADH] FabI (258 aa).

NAD(+) contacts are provided by residues G14, 20-21 (SI), 67-68 (DV), and I95. A98 provides a ligand contact to substrate. Catalysis depends on proton acceptor residues Y148 and Y158. Residues K165 and 194-198 (IRTLS) contribute to the NAD(+) site.

The protein belongs to the short-chain dehydrogenases/reductases (SDR) family. FabI subfamily. As to quaternary structure, homotetramer.

It carries out the reaction a 2,3-saturated acyl-[ACP] + NAD(+) = a (2E)-enoyl-[ACP] + NADH + H(+). The catalysed reaction is (2E)-butenoyl-[ACP] + NADH + H(+) = butanoyl-[ACP] + NAD(+). It functions in the pathway lipid metabolism; fatty acid biosynthesis. Inhibited by triclosan and acrylamide. Catalyzes the reduction of a carbon-carbon double bond in an enoyl moiety that is covalently linked to an acyl carrier protein (ACP). Involved in the elongation cycle of fatty acid which are used in the lipid metabolism. In Bacillus subtilis (strain 168), this protein is Enoyl-[acyl-carrier-protein] reductase [NADH] FabI (fabI).